Consider the following 6298-residue polypeptide: Adhesion G-protein coupled receptor V1 (6298 aa).

A signal peptide spans 1-28 (MSVTSEPGMISSFLLVYLSTLFISFVFG). Calx-beta domains are found at residues 29–116 (EAEI…FHLT), 132–236 (ASVT…IQLR), 251–362 (VEII…IMLL), 389–489 (YGVL…LTIL), 646–746 (PAIA…TLSL), 764–862 (DLII…VILS), 877–980 (VNIT…IILL), 994–1094 (ASLR…IVLF), 1108–1208 (ATVI…LRLV), 1440–1540 (AMPR…FLLK), 1562–1662 (QKSD…VTLV), 1706–1805 (TGLP…VELL), 1846–1948 (ILVT…VSIL), 1962–2075 (TLTI…IELF), 2103–2202 (HLVI…VQLL), 2218–2320 (VITI…VQLA), 2437–2537 (TLCL…FLIS), 2576–2672 (FIIY…VRLG), 2687–2786 (VTVN…VVLY), 2810–2921 (LTVE…VNLT), 2945–3044 (QIVI…LLLT), and 3067–3167 (DGPG…VCTL). Over 29 to 5901 (EAEIRFTGQT…TDNSSSYNEA (5873 aa)) the chain is Extracellular. EAR repeat units lie at residues 3251 to 3292 (VFSI…RWQG), 3293 to 3341 (TFVP…MLTA), 3344 to 3389 (RLVL…RWNG), 3391 to 3435 (NFAW…TWSG), 3437 to 3484 (QFIN…VWEM), and 3488 to 3530 (SLRY…CWNS). Calx-beta domains lie at 3581–3622 (QSDF…RVQL), 3636–3736 (SVRV…VVTL), 3772–3872 (GAVR…VTIA), 3919–4003 (GGVI…ISLV), 4017–4120 (VNVV…IELT), 4135–4235 (SVII…EFQL), 4251–4351 (ARIT…LAIT), 4384–4484 (RIII…ILLI), 4507–4607 (SPFG…IVQL), 4628–4728 (KFGD…AVQL), 4989–5089 (TTAE…INLT), 5281–5325 (AVEE…YVFL), and 5361–5461 (IGFS…FVEL). Residues 5740–5896 (SILALHWNPQ…AVYAQTDNSS (157 aa)) enclose the GAIN-B domain. Intrachain disulfides connect Cys5849-Cys5878 and Cys5866-Cys5880. Positions 5849-5896 (CLLWNQAAASWLSDSQFCKVVEDASDYVECACSHMSVYAVYAQTDNSS) are GPS. Residues 5902-5922 (FFSAGLICISGLCLAVVSHMF) form a helical membrane-spanning segment. At 5923 to 5932 (CARHSMFAAK) the chain is on the cytoplasmic side. The helical transmembrane segment at 5933 to 5953 (LLTHMMVASLGTQILFLASAY) threads the bilayer. The Extracellular segment spans residues 5954 to 5973 (ASPHLSEESCSAVAAVAHYL). Residues 5974 to 5994 (YLCQFSWMLIQSVNFWYVLVV) traverse the membrane as a helical segment. Over 5995–6003 (SDEHTERRC) the chain is Cytoplasmic. Residues 6004-6024 (LLFCLLSWGLPSFVVILLILI) form a helical membrane-spanning segment. Over 6025–6052 (LRGIYHRSMPQIYGLIHGDLCFIPNIYA) the chain is Extracellular. Residues 6053–6073 (ALFTAALVPLMCLVVVFVVFI) form a helical membrane-spanning segment. At 6074–6097 (HAYQLKPQWKGYDDVFRGRTNAAE) the chain is on the cytoplasmic side. The helical transmembrane segment at 6098–6118 (IPLILYLFALISMTWLWGGLH) threads the bilayer. Topologically, residues 6119-6126 (MAYGHFWM) are extracellular. The chain crosses the membrane as a helical span at residues 6127-6147 (LVLFVIFNSLQGLYVFVVYFI). The Cytoplasmic portion of the chain corresponds to 6148–6298 (LHNQTCCPMK…RRIPIADTHL (151 aa)). 2 disordered regions span residues 6206-6242 (ERSSFQQTSQASPDLKTSPQNGASFPSSGGYGPGSLI) and 6264-6283 (SVSDNESGQGSQEGGTLTDS). 2 stretches are compositionally biased toward polar residues: residues 6208–6226 (SSFQQTSQASPDLKTSPQN) and 6265–6283 (VSDNESGQGSQEGGTLTDS).

The protein belongs to the G-protein coupled receptor 2 family. Adhesion G-protein coupled receptor (ADGR) subfamily. As to quaternary structure, forms a heterodimer, consisting of a large extracellular region (alpha subunit) non-covalently linked to a seven-transmembrane moiety (beta subunit). Interacts (via the cytoplasmic region) with PDZD7. Component of USH2 complex, composed of ADGRV1, PDZD7, USH2A and WHRN. Interacts with USH2A and WHRN. Interacts (via the cytoplasmic region) with MYO7A (via MyTH4-FERM domains). In terms of processing, autoproteolytically cleaved into 2 subunits, an extracellular alpha subunit and a seven-transmembrane subunit. As to expression, expressed by oligodendrocytes. In midbrain, enriched in the myelinated regions of the superior and inferior colliculi. In the cochlea, expressed in developing hair cells. Expressed by photoreceptors in the retina.

The protein localises to the cell membrane. The protein resides in the cell projection. Its subcellular location is the stereocilium membrane. It localises to the photoreceptor inner segment. It is found in the secreted. In terms of biological role, G-protein coupled receptor which has an essential role in the development of hearing and vision. Couples to G-alpha(i)-proteins, GNAI1/2/3, G-alpha(q)-proteins, GNAQ, as well as G-alpha(s)-proteins, GNAS, inhibiting adenylate cyclase (AC) activity and cAMP production. Required for the hair bundle ankle formation, which connects growing stereocilia in developing cochlear hair cells of the inner ear. In response to extracellular calcium, activates kinases PKA and PKC to regulate myelination by inhibiting the ubiquitination of MAG, thus enhancing the stability of this protein in myelin-forming cells of the auditory pathway. In retina photoreceptors, the USH2 complex is required for the maintenance of periciliary membrane complex that seems to play a role in regulating intracellular protein transport. Involved in the regulation of bone metabolism. Functionally, cleaved ADGRV1 beta-subunit couples with G-alpha(i)-proteins, GNAI1/2/3, and constitutively inhibits adenylate cyclase (AC) activity with a stronger effect than full ADGRV1. The chain is Adhesion G-protein coupled receptor V1 from Mus musculus (Mouse).